The sequence spans 640 residues: GATA zinc finger domain-containing protein 12 (640 aa).

2 disordered regions span residues 121 to 209 (SNNI…NIPI) and 355 to 390 (QQIRLQQQQSQQQHQQHQQHQQHQQPPTNIPQHINN). Composition is skewed to low complexity over residues 122–209 (NNIP…NIPI) and 355–379 (QQIRLQQQQSQQQHQQHQQHQQHQQ). The span at 380 to 390 (PPTNIPQHINN) shows a compositional bias: polar residues. The GATA-type zinc finger occupies 506–531 (CVNCKTSDTPEWRRGPQGAKTLCNAC).

The polypeptide is GATA zinc finger domain-containing protein 12 (gtaL) (Dictyostelium discoideum (Social amoeba)).